A 976-amino-acid polypeptide reads, in one-letter code: Probable basic-leucine zipper transcription factor Q (976 aa).

Coiled-coil stretches lie at residues 57-110 (AIDS…QYQQ) and 136-287 (QQQQ…QQQQ). Positions 104–128 (YQQQYQQPYTTPSPPDQIDYNQQLS) are disordered. Polar residues-rich tracts occupy residues 374–385 (TNFNGTNNSTPN) and 393–411 (KLSSNNIKNTATPLSSPPS). The interval 374-499 (TNFNGTNNST…PIDSNGDFDL (126 aa)) is disordered. Composition is skewed to low complexity over residues 420–468 (PKNN…FNNN) and 476–490 (STTTPTITSPNMTSP). One can recognise a bZIP domain in the interval 504–567 (EKKKSISRIN…GVEVMRPEPE (64 aa)). Positions 505–507 (KKK) are basic motif. Positions 509 to 516 (ISRINQNL) are leucine-zipper. Residues 855 to 938 (ENQSNNFGNN…VNSNNNNFNN (84 aa)) show a composition bias toward low complexity. The interval 855–957 (ENQSNNFGNN…SADAIPYPST (103 aa)) is disordered.

It belongs to the bZIP family.

Its subcellular location is the nucleus. In terms of biological role, probable transcriptional regulator. This Dictyostelium discoideum (Social amoeba) protein is Probable basic-leucine zipper transcription factor Q (bzpQ).